The chain runs to 57 residues: Potassium channel toxin alpha-KTx 26.1 (57 aa).

The signal sequence occupies residues 1–22; that stretch reads MSRLFVFILIALFLSAIIDVMS. 3 cysteine pairs are disulfide-bonded: Cys-30–Cys-48, Cys-34–Cys-53, and Cys-38–Cys-55.

Belongs to the short scorpion toxin superfamily. Potassium channel inhibitor family. Alpha-KTx 26 subfamily. Expressed by the venom gland.

It localises to the secreted. In terms of biological role, recombinant toxin that reversibly inhibits the potassium current of mKv1.3/KCNA3 channel stably expressed in COS7 cells (IC(50)=150 nM). Also shows a weak inhibition on Kv1.2/KCNA2, Kv1.3/KCNA3 and TRPV1 channels. The protein is Potassium channel toxin alpha-KTx 26.1 of Olivierus martensii (Manchurian scorpion).